A 284-amino-acid polypeptide reads, in one-letter code: RAD52 motif-containing protein 1 (284 aa).

Positions 1–92 are necessary for nuclear localization and for nucleolar accumulation in response to heat shock; that stretch reads MAELVPFAVP…KQLFQKSPVK (92 aa). Residues 15–98 enclose the RRM domain; the sequence is KTLLVWELSS…SPVKVRLGTR (84 aa). The interval 90–133 is necessary for nuclear and nucleolar localization; it reads PVKVRLGTRHKAVQHQALALNSSRCQELANYYFGFNGWSKRIIK.

Homodimer.

Its subcellular location is the nucleus. The protein resides in the cytoplasm. It is found in the nucleolus. It localises to the cajal body. The protein localises to the PML body. Functionally, may confer resistance to the antitumor agent cisplatin. Binds to DNA and RNA. The polypeptide is RAD52 motif-containing protein 1 (RDM1) (Macaca fascicularis (Crab-eating macaque)).